Consider the following 736-residue polypeptide: 1,4-alpha-glucan branching enzyme GlgB 2 (736 aa).

Asp-415 (nucleophile) is an active-site residue. Glu-468 functions as the Proton donor in the catalytic mechanism.

It belongs to the glycosyl hydrolase 13 family. GlgB subfamily. As to quaternary structure, monomer.

It carries out the reaction Transfers a segment of a (1-&gt;4)-alpha-D-glucan chain to a primary hydroxy group in a similar glucan chain.. It participates in glycan biosynthesis; glycogen biosynthesis. In terms of biological role, catalyzes the formation of the alpha-1,6-glucosidic linkages in glycogen by scission of a 1,4-alpha-linked oligosaccharide from growing alpha-1,4-glucan chains and the subsequent attachment of the oligosaccharide to the alpha-1,6 position. The sequence is that of 1,4-alpha-glucan branching enzyme GlgB 2 from Rhizobium johnstonii (strain DSM 114642 / LMG 32736 / 3841) (Rhizobium leguminosarum bv. viciae).